A 464-amino-acid polypeptide reads, in one-letter code: Cysteine--tRNA ligase (464 aa).

Cysteine 27 contributes to the Zn(2+) binding site. The 'HIGH' region signature appears at 29-39 (PTVYNFFHIGN). Zn(2+)-binding residues include cysteine 207, histidine 232, and glutamate 236. A 'KMSKS' region motif is present at residues 264 to 268 (KMSKS). Lysine 267 serves as a coordination point for ATP.

The protein belongs to the class-I aminoacyl-tRNA synthetase family. Monomer. The cofactor is Zn(2+).

The protein localises to the cytoplasm. It catalyses the reaction tRNA(Cys) + L-cysteine + ATP = L-cysteinyl-tRNA(Cys) + AMP + diphosphate. The chain is Cysteine--tRNA ligase from Clostridium acetobutylicum (strain ATCC 824 / DSM 792 / JCM 1419 / IAM 19013 / LMG 5710 / NBRC 13948 / NRRL B-527 / VKM B-1787 / 2291 / W).